We begin with the raw amino-acid sequence, 1070 residues long: Carbamoyl phosphate synthase large chain (1070 aa).

Residues 1–401 (MPKRDDIKTI…ALLKAVRSLE (401 aa)) are carboxyphosphate synthetic domain. Residues Arg129, Arg169, Gly175, Gly176, Lys208, Ile210, Glu215, Gly241, Ile242, His243, Gln284, and Glu298 each coordinate ATP. The 195-residue stretch at 133 to 327 (RDLMNELGEP…IAKLAAKIAV (195 aa)) folds into the ATP-grasp 1 domain. Mg(2+) contacts are provided by Gln284, Glu298, and Asn300. Residues Gln284, Glu298, and Asn300 each contribute to the Mn(2+) site. The oligomerization domain stretch occupies residues 402–546 (VGADHLLLEE…YSTYEEENES (145 aa)). Positions 547–929 (TRSAKESVIV…ALYKGFVASG (383 aa)) are carbamoyl phosphate synthetic domain. In terms of domain architecture, ATP-grasp 2 spans 671 to 861 (EKALEILQIP…MANVATRVIL (191 aa)). Arg707, Arg746, Val748, Glu752, Gly777, Val778, His779, Ser780, Gln820, and Glu832 together coordinate ATP. Mg(2+) contacts are provided by Gln820, Glu832, and Asn834. Residues Gln820, Glu832, and Asn834 each contribute to the Mn(2+) site. The MGS-like domain maps to 930–1070 (TTMHDYGTVL…SEVKQPKVRV (141 aa)). Positions 930–1070 (TTMHDYGTVL…SEVKQPKVRV (141 aa)) are allosteric domain.

Belongs to the CarB family. As to quaternary structure, composed of two chains; the small (or glutamine) chain promotes the hydrolysis of glutamine to ammonia, which is used by the large (or ammonia) chain to synthesize carbamoyl phosphate. Tetramer of heterodimers (alpha,beta)4. Requires Mg(2+) as cofactor. Mn(2+) is required as a cofactor.

The enzyme catalyses hydrogencarbonate + L-glutamine + 2 ATP + H2O = carbamoyl phosphate + L-glutamate + 2 ADP + phosphate + 2 H(+). It catalyses the reaction hydrogencarbonate + NH4(+) + 2 ATP = carbamoyl phosphate + 2 ADP + phosphate + 2 H(+). Its pathway is amino-acid biosynthesis; L-arginine biosynthesis; carbamoyl phosphate from bicarbonate: step 1/1. It functions in the pathway pyrimidine metabolism; UMP biosynthesis via de novo pathway; (S)-dihydroorotate from bicarbonate: step 1/3. Large subunit of the glutamine-dependent carbamoyl phosphate synthetase (CPSase). CPSase catalyzes the formation of carbamoyl phosphate from the ammonia moiety of glutamine, carbonate, and phosphate donated by ATP, constituting the first step of 2 biosynthetic pathways, one leading to arginine and/or urea and the other to pyrimidine nucleotides. The large subunit (synthetase) binds the substrates ammonia (free or transferred from glutamine from the small subunit), hydrogencarbonate and ATP and carries out an ATP-coupled ligase reaction, activating hydrogencarbonate by forming carboxy phosphate which reacts with ammonia to form carbamoyl phosphate. This chain is Carbamoyl phosphate synthase large chain, found in Listeria welshimeri serovar 6b (strain ATCC 35897 / DSM 20650 / CCUG 15529 / CIP 8149 / NCTC 11857 / SLCC 5334 / V8).